Reading from the N-terminus, the 617-residue chain is tRNA uridine 5-carboxymethylaminomethyl modification enzyme MnmG (617 aa).

Residues 9-14 (GAGHAG), V121, and T176 contribute to the FAD site. NAD(+) is bound at residue 269 to 283 (GPRYCPSIEDKFVRF). Residue Q366 coordinates FAD.

Belongs to the MnmG family. As to quaternary structure, homodimer. Heterotetramer of two MnmE and two MnmG subunits. Requires FAD as cofactor.

Its subcellular location is the cytoplasm. In terms of biological role, NAD-binding protein involved in the addition of a carboxymethylaminomethyl (cmnm) group at the wobble position (U34) of certain tRNAs, forming tRNA-cmnm(5)s(2)U34. The sequence is that of tRNA uridine 5-carboxymethylaminomethyl modification enzyme MnmG from Acholeplasma laidlawii (strain PG-8A).